Here is a 420-residue protein sequence, read N- to C-terminus: UDP-N-acetylglucosamine 1-carboxyvinyltransferase (420 aa).

22-23 (KN) serves as a coordination point for phosphoenolpyruvate. Arg93 serves as a coordination point for UDP-N-acetyl-alpha-D-glucosamine. The Proton donor role is filled by Cys117. Cys117 bears the 2-(S-cysteinyl)pyruvic acid O-phosphothioketal mark. 2 residues coordinate UDP-N-acetyl-alpha-D-glucosamine: Asp306 and Ile328.

This sequence belongs to the EPSP synthase family. MurA subfamily.

The protein localises to the cytoplasm. The catalysed reaction is phosphoenolpyruvate + UDP-N-acetyl-alpha-D-glucosamine = UDP-N-acetyl-3-O-(1-carboxyvinyl)-alpha-D-glucosamine + phosphate. It participates in cell wall biogenesis; peptidoglycan biosynthesis. Functionally, cell wall formation. Adds enolpyruvyl to UDP-N-acetylglucosamine. This chain is UDP-N-acetylglucosamine 1-carboxyvinyltransferase, found in Colwellia psychrerythraea (strain 34H / ATCC BAA-681) (Vibrio psychroerythus).